The sequence spans 207 residues: Probable RNA 2'-phosphotransferase (207 aa).

The protein belongs to the KptA/TPT1 family.

In terms of biological role, removes the 2'-phosphate from RNA via an intermediate in which the phosphate is ADP-ribosylated by NAD followed by a presumed transesterification to release the RNA and generate ADP-ribose 1''-2''-cyclic phosphate (APPR&gt;P). May function as an ADP-ribosylase. The chain is Probable RNA 2'-phosphotransferase from Methanosarcina barkeri (strain Fusaro / DSM 804).